A 419-amino-acid chain; its full sequence is Probable dual-specificity RNA methyltransferase RlmN (419 aa).

Residues 1–21 are disordered; sequence MTAESDSPDGPVSAGTGRPVR. The Proton acceptor role is filled by Glu124. One can recognise a Radical SAM core domain in the interval 130-369; the sequence is YPDRATVCVS…ATTVRDTRGR (240 aa). Cys137 and Cys375 are disulfide-bonded. [4Fe-4S] cluster contacts are provided by Cys144, Cys148, and Cys151. S-adenosyl-L-methionine is bound by residues 199 to 200, Ser233, 256 to 258, and Asn332; these read GE and SLH. Catalysis depends on Cys375, which acts as the S-methylcysteine intermediate. The segment at 383-419 is disordered; the sequence is AGRARRVESARPVESARPVGVAGAASGSPAHGSRVLR. The segment covering 397–419 has biased composition (low complexity); sequence SARPVGVAGAASGSPAHGSRVLR.

This sequence belongs to the radical SAM superfamily. RlmN family. The cofactor is [4Fe-4S] cluster.

The protein resides in the cytoplasm. It catalyses the reaction adenosine(2503) in 23S rRNA + 2 reduced [2Fe-2S]-[ferredoxin] + 2 S-adenosyl-L-methionine = 2-methyladenosine(2503) in 23S rRNA + 5'-deoxyadenosine + L-methionine + 2 oxidized [2Fe-2S]-[ferredoxin] + S-adenosyl-L-homocysteine. The enzyme catalyses adenosine(37) in tRNA + 2 reduced [2Fe-2S]-[ferredoxin] + 2 S-adenosyl-L-methionine = 2-methyladenosine(37) in tRNA + 5'-deoxyadenosine + L-methionine + 2 oxidized [2Fe-2S]-[ferredoxin] + S-adenosyl-L-homocysteine. In terms of biological role, specifically methylates position 2 of adenine 2503 in 23S rRNA and position 2 of adenine 37 in tRNAs. This chain is Probable dual-specificity RNA methyltransferase RlmN, found in Frankia alni (strain DSM 45986 / CECT 9034 / ACN14a).